The primary structure comprises 348 residues: Chaperone protein DnaJ (348 aa).

The J domain occupies aspartate 3–valine 65. The CR-type zinc finger occupies glycine 109 to proline 191. Positions 122, 125, 139, 142, 165, 168, 179, and 182 each coordinate Zn(2+). CXXCXGXG motif repeat units lie at residues cysteine 122 to arginine 129, cysteine 139 to glycine 146, cysteine 165 to glycine 172, and cysteine 179 to glycine 186.

Belongs to the DnaJ family. In terms of assembly, homodimer. Zn(2+) is required as a cofactor.

Its subcellular location is the cytoplasm. In terms of biological role, participates actively in the response to hyperosmotic and heat shock by preventing the aggregation of stress-denatured proteins and by disaggregating proteins, also in an autonomous, DnaK-independent fashion. Unfolded proteins bind initially to DnaJ; upon interaction with the DnaJ-bound protein, DnaK hydrolyzes its bound ATP, resulting in the formation of a stable complex. GrpE releases ADP from DnaK; ATP binding to DnaK triggers the release of the substrate protein, thus completing the reaction cycle. Several rounds of ATP-dependent interactions between DnaJ, DnaK and GrpE are required for fully efficient folding. Also involved, together with DnaK and GrpE, in the DNA replication of plasmids through activation of initiation proteins. The chain is Chaperone protein DnaJ from Tropheryma whipplei (strain TW08/27) (Whipple's bacillus).